The following is a 269-amino-acid chain: 4-hydroxy-tetrahydrodipicolinate reductase (269 aa).

Residues 8–13 (GAAGRM) and Glu34 each bind NAD(+). Arg35 contacts NADP(+). NAD(+)-binding positions include 98 to 100 (GTT) and 122 to 125 (APNY). The Proton donor/acceptor role is filled by His155. Residue His156 coordinates (S)-2,3,4,5-tetrahydrodipicolinate. Lys159 serves as the catalytic Proton donor. 165 to 166 (GT) lines the (S)-2,3,4,5-tetrahydrodipicolinate pocket.

Belongs to the DapB family.

It is found in the cytoplasm. It catalyses the reaction (S)-2,3,4,5-tetrahydrodipicolinate + NAD(+) + H2O = (2S,4S)-4-hydroxy-2,3,4,5-tetrahydrodipicolinate + NADH + H(+). The catalysed reaction is (S)-2,3,4,5-tetrahydrodipicolinate + NADP(+) + H2O = (2S,4S)-4-hydroxy-2,3,4,5-tetrahydrodipicolinate + NADPH + H(+). It functions in the pathway amino-acid biosynthesis; L-lysine biosynthesis via DAP pathway; (S)-tetrahydrodipicolinate from L-aspartate: step 4/4. In terms of biological role, catalyzes the conversion of 4-hydroxy-tetrahydrodipicolinate (HTPA) to tetrahydrodipicolinate. This Vibrio cholerae serotype O1 (strain ATCC 39315 / El Tor Inaba N16961) protein is 4-hydroxy-tetrahydrodipicolinate reductase.